We begin with the raw amino-acid sequence, 192 residues long: Leucine-rich repeat-containing protein 51 (192 aa).

LRR repeat units lie at residues S49 to V71, N80 to F101, and N103 to A124. Residues N137–W175 form the LRRCT domain.

Widely expressed in adult and embryonic tissues. Expressed in the developing choroid plexus from 12.5 dpc and in the epithelium of the developing airway tract from 14.5 dpc. Also expressed in the postnatal inner ear.

It is found in the cytoplasm. This Mus musculus (Mouse) protein is Leucine-rich repeat-containing protein 51.